Here is a 364-residue protein sequence, read N- to C-terminus: Trans-enoyl reductase sthE (364 aa).

51–54 (TDYK) lines the NADP(+) pocket. 137 to 144 (WGTAALAI) contacts substrate. NADP(+) contacts are provided by residues 172-175 (ATAT), 195-198 (SESS), Tyr-213, and 261-262 (LE). A substrate-binding site is contributed by 281-285 (GFEGQ). Position 351-352 (351-352 (VK)) interacts with NADP(+).

This sequence belongs to the zinc-containing alcohol dehydrogenase family. In terms of assembly, monomer.

It carries out the reaction 7 malonyl-CoA + acetyl-CoA + 10 AH2 + 5 S-adenosyl-L-methionine + 2 H(+) = dehydroprobetaenone I + 10 A + 5 S-adenosyl-L-homocysteine + 7 CO2 + 8 CoA + 6 H2O. The protein operates within mycotoxin biosynthesis. Trans-enoyl reductase; part of the gene cluster that mediates the biosynthesis of the phytotoxin stemphyloxin II. The first step of the pathway is the synthesis of dehydroprobetaenone I by the polyketide synthase sthA and the enoyl reductase sthE via condensation of one acetyl-CoA starter unit with 7 malonyl-CoA units and 5 methylations. The C-terminal reductase (R) domain of sthA catalyzes the reductive release of the polyketide chain. Because sthA lacks a designated enoylreductase (ER) domain, the required activity is provided the enoyl reductase sthE. The short-chain dehydrogenase/reductase sthC then catalyzes reduction of dehydroprobetaenone I to probetaenone I. The cytochrome P450 monooxygenase sthF catalyzes successive epoxidation, oxidation (resulting from epoxide opening) and hydroxylation to install a tertiary alcohol in the decaline ring to yield betaenone C from dehydroprobetaenone I and betaenone B from probetaenone I. The FAD-linked oxidoreductase sthB is responsible for the conversion of betaenone C to betaenone A via an intramolecular aldol reaction between C-1 and C-17 to form the bridged tricyclic system in betaenone A. Finally, the cytochrome P450 monooxygenase sthD catalyzes the hydroxylation of C-15 to afford the final metabolite stemphyloxin II. This chain is Trans-enoyl reductase sthE, found in Phaeosphaeria nodorum (strain SN15 / ATCC MYA-4574 / FGSC 10173) (Glume blotch fungus).